We begin with the raw amino-acid sequence, 364 residues long: Chorismate synthase (364 aa).

Arg-47 is an NADP(+) binding site. Residues Arg-125–Ser-127, Gly-285, Lys-300–Ser-304, and Arg-327 contribute to the FMN site.

This sequence belongs to the chorismate synthase family. Homotetramer. The cofactor is FMNH2.

It catalyses the reaction 5-O-(1-carboxyvinyl)-3-phosphoshikimate = chorismate + phosphate. Its pathway is metabolic intermediate biosynthesis; chorismate biosynthesis; chorismate from D-erythrose 4-phosphate and phosphoenolpyruvate: step 7/7. Functionally, catalyzes the anti-1,4-elimination of the C-3 phosphate and the C-6 proR hydrogen from 5-enolpyruvylshikimate-3-phosphate (EPSP) to yield chorismate, which is the branch point compound that serves as the starting substrate for the three terminal pathways of aromatic amino acid biosynthesis. This reaction introduces a second double bond into the aromatic ring system. This is Chorismate synthase from Dehalococcoides mccartyi (strain ATCC BAA-2100 / JCM 16839 / KCTC 5957 / BAV1).